Consider the following 408-residue polypeptide: tRNA(Met) cytidine acetate ligase (408 aa).

Residues 7–20 (IVEYNPFHNGHKYH), glycine 102, asparagine 170, and 195–196 (RI) contribute to the ATP site.

This sequence belongs to the TmcAL family.

The protein resides in the cytoplasm. The catalysed reaction is cytidine(34) in elongator tRNA(Met) + acetate + ATP = N(4)-acetylcytidine(34) in elongator tRNA(Met) + AMP + diphosphate. Catalyzes the formation of N(4)-acetylcytidine (ac(4)C) at the wobble position of elongator tRNA(Met), using acetate and ATP as substrates. First activates an acetate ion to form acetyladenylate (Ac-AMP) and then transfers the acetyl group to tRNA to form ac(4)C34. This chain is tRNA(Met) cytidine acetate ligase, found in Clostridium kluyveri (strain NBRC 12016).